The primary structure comprises 618 residues: Methionine--tRNA ligase (618 aa).

A 'HIGH' region motif is present at residues 12-22 (YYVNAEPHLGH). Zn(2+)-binding residues include cysteine 127, cysteine 130, cysteine 144, and histidine 147. A 'KMSKS' region motif is present at residues 297-301 (KMSKT). Residue lysine 300 participates in ATP binding. The region spanning 518–618 (DFAKVELRVA…GEVPPGAVVK (101 aa)) is the tRNA-binding domain.

Belongs to the class-I aminoacyl-tRNA synthetase family. MetG type 2A subfamily. As to quaternary structure, homodimer. Zn(2+) is required as a cofactor.

The protein resides in the cytoplasm. The enzyme catalyses tRNA(Met) + L-methionine + ATP = L-methionyl-tRNA(Met) + AMP + diphosphate. In terms of biological role, is required not only for elongation of protein synthesis but also for the initiation of all mRNA translation through initiator tRNA(fMet) aminoacylation. The polypeptide is Methionine--tRNA ligase (metG) (Thermus thermophilus (strain ATCC 27634 / DSM 579 / HB8)).